The following is a 90-amino-acid chain: UPF0335 protein RPB_1426 (90 aa).

Belongs to the UPF0335 family.

This chain is UPF0335 protein RPB_1426, found in Rhodopseudomonas palustris (strain HaA2).